We begin with the raw amino-acid sequence, 133 residues long: Profilin-1 (133 aa).

The protein belongs to the profilin family. In terms of assembly, occurs in many kinds of cells as a complex with monomeric actin in a 1:1 ratio. Ubiquitous.

It is found in the cytoplasm. The protein localises to the cytoskeleton. Binds to actin and affects the structure of the cytoskeleton. At high concentrations, profilin prevents the polymerization of actin, whereas it enhances it at low concentrations. By binding to PIP2, it inhibits the formation of IP3 and DG. The polypeptide is Profilin-1 (PRO1) (Solanum lycopersicum (Tomato)).